The chain runs to 218 residues: GTP cyclohydrolase 1 (218 aa).

Residues cysteine 109, histidine 112, and cysteine 180 each coordinate Zn(2+).

The protein belongs to the GTP cyclohydrolase I family. Toroid-shaped homodecamer, composed of two pentamers of five dimers.

The catalysed reaction is GTP + H2O = 7,8-dihydroneopterin 3'-triphosphate + formate + H(+). It participates in cofactor biosynthesis; 7,8-dihydroneopterin triphosphate biosynthesis; 7,8-dihydroneopterin triphosphate from GTP: step 1/1. The polypeptide is GTP cyclohydrolase 1 (Haemophilus ducreyi (strain 35000HP / ATCC 700724)).